The chain runs to 251 residues: Zinc import ATP-binding protein ZnuC (251 aa).

Residues 5-220 (VSLENVSVSF…PEFISMFGPR (216 aa)) enclose the ABC transporter domain. 37–44 (GPNGAGKS) is an ATP binding site.

It belongs to the ABC transporter superfamily. Zinc importer (TC 3.A.1.15.5) family. As to quaternary structure, the complex is composed of two ATP-binding proteins (ZnuC), two transmembrane proteins (ZnuB) and a solute-binding protein (ZnuA).

Its subcellular location is the cell inner membrane. It catalyses the reaction Zn(2+)(out) + ATP(in) + H2O(in) = Zn(2+)(in) + ADP(in) + phosphate(in) + H(+)(in). Its function is as follows. Part of the ABC transporter complex ZnuABC involved in zinc import. Responsible for energy coupling to the transport system. The chain is Zinc import ATP-binding protein ZnuC from Shigella dysenteriae serotype 1 (strain Sd197).